A 49-amino-acid polypeptide reads, in one-letter code: MRNKSRGFPNMNNNKFEGEPRAKDDFASKRPDGSTNTHPQERMRASGKR.

The segment at 1-49 is disordered; the sequence is MRNKSRGFPNMNNNKFEGEPRAKDDFASKRPDGSTNTHPQERMRASGKR. Basic and acidic residues-rich tracts occupy residues 16–32 and 39–49; these read FEGEPRAKDDFASKRPD and PQERMRASGKR.

The protein belongs to the SspK family.

The protein localises to the spore core. The chain is Small, acid-soluble spore protein K from Bacillus licheniformis (strain ATCC 14580 / DSM 13 / JCM 2505 / CCUG 7422 / NBRC 12200 / NCIMB 9375 / NCTC 10341 / NRRL NRS-1264 / Gibson 46).